The following is a 154-amino-acid chain: Superoxide dismutase [Cu-Zn] (154 aa).

Histidine 47, histidine 49, and histidine 64 together coordinate Cu cation. A disulfide bridge links cysteine 58 with cysteine 147. Positions 64, 72, 81, and 84 each coordinate Zn(2+). Cu cation is bound at residue histidine 121. Residues 122–143 (GGTDDLGKGGNEESLKTGNAGP) are disordered. The span at 123–136 (GTDDLGKGGNEESL) shows a compositional bias: basic and acidic residues. Arginine 144 is a substrate binding site.

This sequence belongs to the Cu-Zn superoxide dismutase family. As to quaternary structure, homodimer. The cofactor is Cu cation. It depends on Zn(2+) as a cofactor.

The protein resides in the cytoplasm. It carries out the reaction 2 superoxide + 2 H(+) = H2O2 + O2. Functionally, destroys radicals which are normally produced within the cells and which are toxic to biological systems. This Cordyceps militaris (Caterpillar fungus) protein is Superoxide dismutase [Cu-Zn] (SOD1).